The primary structure comprises 279 residues: DegV domain-containing protein CPE1310 (279 aa).

Residues 4–277 (IKIITDSTCD…PKVCALFYVE (274 aa)) form the DegV domain. Positions 62 and 94 each coordinate hexadecanoate.

Its function is as follows. May bind long-chain fatty acids, such as palmitate, and may play a role in lipid transport or fatty acid metabolism. The sequence is that of DegV domain-containing protein CPE1310 from Clostridium perfringens (strain 13 / Type A).